A 294-amino-acid chain; its full sequence is Glyceraldehyde-3-phosphate dehydrogenase (294 aa).

The NAD(+) site is built by Asp-19, Lys-63, and Thr-105. D-glyceraldehyde 3-phosphate is bound by residues 134 to 136 (SCT) and Thr-165. Residue Cys-135 is the Nucleophile of the active site. The segment at 169 to 188 (KTVDGPSHKDWRGGRGASQN) is disordered. Residues 194–195 (TG) and Arg-217 contribute to the D-glyceraldehyde 3-phosphate site.

Belongs to the glyceraldehyde-3-phosphate dehydrogenase family. In terms of assembly, homotetramer.

It localises to the cytoplasm. It carries out the reaction D-glyceraldehyde 3-phosphate + phosphate + NAD(+) = (2R)-3-phospho-glyceroyl phosphate + NADH + H(+). Its pathway is carbohydrate degradation; glycolysis; pyruvate from D-glyceraldehyde 3-phosphate: step 1/5. In terms of biological role, catalyzes the oxidative phosphorylation of glyceraldehyde 3-phosphate (G3P) to 1,3-bisphosphoglycerate (BPG) using the cofactor NAD. The first reaction step involves the formation of a hemiacetal intermediate between G3P and a cysteine residue, and this hemiacetal intermediate is then oxidized to a thioester, with concomitant reduction of NAD to NADH. The reduced NADH is then exchanged with the second NAD, and the thioester is attacked by a nucleophilic inorganic phosphate to produce BPG. This chain is Glyceraldehyde-3-phosphate dehydrogenase (gap), found in Serratia marcescens.